The sequence spans 337 residues: 4-hydroxyproline 2-epimerase (337 aa).

Cysteine 91 (proton acceptor) is an active-site residue. Substrate-binding positions include glycine 92–histidine 93, aspartate 252, and glycine 257–threonine 258.

The protein belongs to the proline racemase family.

It carries out the reaction trans-4-hydroxy-L-proline = cis-4-hydroxy-D-proline. Functionally, catalyzes the epimerization of trans-4-hydroxy-L-proline (t4LHyp) to cis-4-hydroxy-D-proline (c4DHyp). Is involved in a degradation pathway that converts t4LHyp to alpha-ketoglutarate, which allows R.sphaeroides to grow on t4LHyp as a sole carbon source. Displays no proline racemase activity. The chain is 4-hydroxyproline 2-epimerase from Cereibacter sphaeroides (strain ATCC 17023 / DSM 158 / JCM 6121 / CCUG 31486 / LMG 2827 / NBRC 12203 / NCIMB 8253 / ATH 2.4.1.) (Rhodobacter sphaeroides).